The primary structure comprises 568 residues: MVLDPKEKMPDDGASGDHGDSASLGAINPAYSNSSLPHSTGDSEEPFTTYFDEKIPIPEEEYSCFSFRKLWAFTGPGFLMSIAYLDPGNIESDLQSGAVAGFKLLWVLLLATIVGLLLQRLAARLGVVTGLHLAEVCHRQYPKVPRIILWLMVELAIIGSDMQEVIGSAIAINLLSAGRVPLWGGVLITIADTFVFLFLDKYGLRKLEAFFGFLITIMALTFGYEYITVKPSQSQVLRGMFVPSCPGCRTPQVEQAVGIVGAVIMPHNMYLHSALVKSRQVNRANKQEVREANKYFFIESCIALFVSFIINVFVVSVFAEAFFEKTNKQVVEVCKNNSSPHADLFPSDNSTLAVDIYKGGVVLGCYFGPAALYIWAVGILAAGQSSTMTGTYSGQFVMEGFLNLKWSRFARVILTRSIAIIPTLLVAVFQDVEHLTGMNDFLNVLQSLQLPFALIPILTFTSLRPVMSEFSNGIGWRIAGGILVLIVCSINMYFVVVYVQELGHVALYVVAAVVSVAYLTFVFYLGWQCLIALGLSFLDCGRSYRLGLTAQPELYLLNTVDADSVVSR.

Positions M1 to D20 are enriched in basic and acidic residues. The interval M1–E45 is disordered. The Cytoplasmic segment spans residues M1 to K69. Residues A30–T40 show a composition bias toward polar residues. The helical transmembrane segment at L70–I90 threads the bilayer. Residues E91–Q95 are Extracellular-facing. A helical membrane pass occupies residues S96–L117. At L118–E154 the chain is on the cytoplasmic side. A helical membrane pass occupies residues L155 to L175. Over S176 to R179 the chain is Extracellular. The chain crosses the membrane as a helical span at residues V180–F194. At V195–E208 the chain is on the cytoplasmic side. The helical transmembrane segment at A209–V229 threads the bilayer. Residues K230–Q255 are Extracellular-facing. Residues A256–V276 form a helical membrane-spanning segment. At K277 to C301 the chain is on the cytoplasmic side. Residues I302–F322 traverse the membrane as a helical segment. At F323–G360 the chain is on the extracellular side. N-linked (GlcNAc...) asparagine glycosylation is found at N336 and N349. Residues V361–A381 traverse the membrane as a helical segment. Topologically, residues A382–R408 are cytoplasmic. A helical membrane pass occupies residues F409–F429. The Extracellular portion of the chain corresponds to Q430–D440. Residues F441–T461 form a helical membrane-spanning segment. Topologically, residues S462–I482 are cytoplasmic. The helical transmembrane segment at L483–G503 threads the bilayer. At H504 to A506 the chain is on the extracellular side. Residues L507 to W527 form a helical membrane-spanning segment. Residues Q528–R568 lie on the Cytoplasmic side of the membrane. Residues Y555–T559 are required for early endosome targeting. Phosphoserine is present on residues L556, S564, and S567.

The protein belongs to the NRAMP family. Forms a complex with NDFIP1 and NEDD4L, in cortical neurons, in response to iron and cobalt exposure; this interaction leads to SLC11A2 ubiquitination by NEDD4L and proteasome-dependent degradation. Interacts with NDFIP1, NDFIP2 and WWP2; this interaction leads to SLC11A2 ubiquitination by WWP2 and subsequent proteasome-dependent degradation. Interacts with COX2 and TOM6 at the outer mitochondrion membrane. Interacts with ARRDC1; this interaction regulates the incorporation of SLC11A2 into extracellular vesicles through an ubiquitination-dependent mechanism. Interacts with ARRDC4; controls the incorporation of SLC11A2 into extracellular vesicles through an ubiquitination-dependent mechanism. Post-translationally, ubiquitinated by WWP2. In terms of processing, N-glycosylated. In terms of tissue distribution, abundantly expressed in erythroid precursor cells (at protein level). Expressed in duodenum (at protein level).

The protein resides in the golgi apparatus. It localises to the trans-Golgi network membrane. It is found in the early endosome membrane. Its subcellular location is the recycling endosome membrane. The protein localises to the cell membrane. The protein resides in the late endosome membrane. It localises to the lysosome membrane. It is found in the apical cell membrane. Its subcellular location is the mitochondrion outer membrane. The protein localises to the extracellular vesicle membrane. The catalysed reaction is Fe(2+)(in) + H(+)(in) = Fe(2+)(out) + H(+)(out). The enzyme catalyses Co(2+)(out) + H(+)(out) = Co(2+)(in) + H(+)(in). It catalyses the reaction Cd(2+)(out) + H(+)(out) = Cd(2+)(in) + H(+)(in). It carries out the reaction Mn(2+)(in) + H(+)(in) = Mn(2+)(out) + H(+)(out). The catalysed reaction is Zn(2+)(out) + H(+)(out) = Zn(2+)(in) + H(+)(in). The enzyme catalyses Ni(2+)(out) + H(+)(out) = Ni(2+)(in) + H(+)(in). It catalyses the reaction H(+)(in) = H(+)(out). It carries out the reaction Fe(2+)(in) = Fe(2+)(out). Proton-coupled metal ion symporter operating with a proton to metal ion stoichiometry of 1:1. Selectively transports various divalent metal cations, in decreasing affinity: Cd(2+) &gt; Fe(2+) &gt; Co(2+), Mn(2+) &gt;&gt; Zn(2+), Ni(2+), VO(2+). Essential for maintenance of iron homeostasis by modulating intestinal absorption of dietary Fe(2+) and TF-associated endosomal Fe(2+) transport in erythroid precursors and other cells. Enables Fe(2+) and Mn(2+) ion entry into mitochondria, and is thus expected to promote mitochondrial heme synthesis, iron-sulfur cluster biogenesis and antioxidant defense. Can mediate uncoupled fluxes of either protons or metal ions. The chain is Natural resistance-associated macrophage protein 2 (Slc11a2) from Mus musculus (Mouse).